Consider the following 428-residue polypeptide: Acetyltransferase sirH (428 aa).

An N-linked (GlcNAc...) asparagine glycan is attached at N8. 6 consecutive transmembrane segments (helical) span residues L33 to L53, V55 to S75, A78 to V98, L305 to S325, G329 to L349, and F366 to F386.

This sequence belongs to the wax synthase family.

Its subcellular location is the membrane. The protein operates within polyketide biosynthesis. In terms of biological role, acetyltransferase; part of the gene cluster that mediates the biosynthesis of asperlin, a polyketide showing anti-inflammatory, antitumor and antibiotic activities. The first step of the asperlin biosynthesis is the production of the intermediate 2,4,6-octatrienoic acid by the highly redusing polyketide synthase alnA with cleavage of the PKS product by the esterase alnB. 2,4,6-octatrienoic acid is further converted to asperlin via several steps involving the remaining enzymes from the cluster. The sequence is that of Acetyltransferase sirH from Emericella nidulans (strain FGSC A4 / ATCC 38163 / CBS 112.46 / NRRL 194 / M139) (Aspergillus nidulans).